The sequence spans 309 residues: Zinc finger protein-like 1 homolog (309 aa).

The B box-type; degenerate zinc finger occupies Met1 to Trp43. The RING-type; atypical zinc finger occupies Cys53–Ser101. Residues Gly200–Asn221 are disordered. A helical transmembrane segment spans residues Lys254–Met274.

This sequence belongs to the ZFPL1 family.

The protein localises to the membrane. In Caenorhabditis elegans, this protein is Zinc finger protein-like 1 homolog.